The following is a 228-amino-acid chain: Large ribosomal subunit protein uL4 (228 aa).

Disordered regions lie at residues 45–102 and 208–228; these read GRQG…SQRT and PAKGKTAKAAATSGEAEEANQ. The span at 208–221 shows a compositional bias: low complexity; sequence PAKGKTAKAAATSG.

It belongs to the universal ribosomal protein uL4 family. Part of the 50S ribosomal subunit.

In terms of biological role, one of the primary rRNA binding proteins, this protein initially binds near the 5'-end of the 23S rRNA. It is important during the early stages of 50S assembly. It makes multiple contacts with different domains of the 23S rRNA in the assembled 50S subunit and ribosome. Its function is as follows. Forms part of the polypeptide exit tunnel. The chain is Large ribosomal subunit protein uL4 from Saccharopolyspora erythraea (strain ATCC 11635 / DSM 40517 / JCM 4748 / NBRC 13426 / NCIMB 8594 / NRRL 2338).